Here is a 142-residue protein sequence, read N- to C-terminus: ATP synthase epsilon chain (142 aa).

This sequence belongs to the ATPase epsilon chain family. In terms of assembly, F-type ATPases have 2 components, CF(1) - the catalytic core - and CF(0) - the membrane proton channel. CF(1) has five subunits: alpha(3), beta(3), gamma(1), delta(1), epsilon(1). CF(0) has three main subunits: a, b and c.

It localises to the cell inner membrane. Functionally, produces ATP from ADP in the presence of a proton gradient across the membrane. The protein is ATP synthase epsilon chain of Shewanella piezotolerans (strain WP3 / JCM 13877).